A 315-amino-acid chain; its full sequence is Ribosomal RNA small subunit methyltransferase H (315 aa).

Residues 37–39, D57, F83, D105, and Q112 contribute to the S-adenosyl-L-methionine site; that span reads GGH.

This sequence belongs to the methyltransferase superfamily. RsmH family.

It is found in the cytoplasm. The enzyme catalyses cytidine(1402) in 16S rRNA + S-adenosyl-L-methionine = N(4)-methylcytidine(1402) in 16S rRNA + S-adenosyl-L-homocysteine + H(+). Functionally, specifically methylates the N4 position of cytidine in position 1402 (C1402) of 16S rRNA. This Pseudomonas putida (strain ATCC 47054 / DSM 6125 / CFBP 8728 / NCIMB 11950 / KT2440) protein is Ribosomal RNA small subunit methyltransferase H.